A 120-amino-acid chain; its full sequence is UPF0102 protein CBU_1742 (120 aa).

Belongs to the UPF0102 family.

This Coxiella burnetii (strain RSA 493 / Nine Mile phase I) protein is UPF0102 protein CBU_1742.